The sequence spans 434 residues: Trigger factor (434 aa).

In terms of domain architecture, PPIase FKBP-type spans 163 to 248 (GDRVTIDFEG…LTKIEAQHLP (86 aa)).

It belongs to the FKBP-type PPIase family. Tig subfamily.

Its subcellular location is the cytoplasm. The catalysed reaction is [protein]-peptidylproline (omega=180) = [protein]-peptidylproline (omega=0). Functionally, involved in protein export. Acts as a chaperone by maintaining the newly synthesized protein in an open conformation. Functions as a peptidyl-prolyl cis-trans isomerase. The chain is Trigger factor from Methylibium petroleiphilum (strain ATCC BAA-1232 / LMG 22953 / PM1).